The following is a 188-amino-acid chain: MRITIAGKIGSGKSTVSSELSRITGYTVYSSGTFFRETARKMNMSIEDFNVYSESHPEADYYTDETQKAFMQANDNIIVEGRLAGWISYLNGINAFRIFLYATYYTRLVRFAGRENIDIDSARDLMEKREKSEKERYRKLYGIDVDDLSIYDIVVNTEFMKPPEIAVYIANRIDEMSRKDIFTPRILR.

Residue 7–15 participates in ATP binding; it reads GKIGSGKST.

This sequence belongs to the cytidylate kinase family. Type 2 subfamily.

The protein resides in the cytoplasm. It carries out the reaction CMP + ATP = CDP + ADP. The enzyme catalyses dCMP + ATP = dCDP + ADP. This is Cytidylate kinase (cmk) from Thermoplasma acidophilum (strain ATCC 25905 / DSM 1728 / JCM 9062 / NBRC 15155 / AMRC-C165).